A 515-amino-acid polypeptide reads, in one-letter code: Lysine--tRNA ligase (515 aa).

Mg(2+) is bound by residues E425 and E432.

Belongs to the class-II aminoacyl-tRNA synthetase family. In terms of assembly, homodimer. Mg(2+) is required as a cofactor.

It is found in the cytoplasm. It carries out the reaction tRNA(Lys) + L-lysine + ATP = L-lysyl-tRNA(Lys) + AMP + diphosphate. The sequence is that of Lysine--tRNA ligase from Cupriavidus metallidurans (strain ATCC 43123 / DSM 2839 / NBRC 102507 / CH34) (Ralstonia metallidurans).